Consider the following 787-residue polypeptide: Disease resistance protein ADR1 (787 aa).

In terms of domain architecture, RPW8 spans 1–149 (MASFIDLFAG…LLTERNDSLS (149 aa)). Residues 96–112 (HANKMKDLEKQISRFLN) adopt a coiled-coil conformation. Position 193–200 (193–200 (GMSGSGKT)) interacts with ATP. The region spanning 247–414 (HQRKLVILDD…PLDLLTSVWV (168 aa)) is the NB-ARC domain. LRR repeat units follow at residues 549–575 (MSRL…IFAN), 576–599 (LAKL…TIPL), 650–674 (ITSL…LSNV), and 722–745 (LGSL…VAAL).

Belongs to the disease resistance NB-LRR family.

Disease resistance (R) protein that mediates resistance against Hyaloperonospora parasitica in a salicylic acid-dependent manner. Also mediates resistance against Erysiphe cichoracearum is both salicylic acid-dependent and partially NPR1-dependent. Resistance proteins guard the plant against pathogens that contain an appropriate avirulence protein via an indirect interaction with this avirulence protein. That triggers a defense system including the hypersensitive response, which restricts the pathogen growth. The polypeptide is Disease resistance protein ADR1 (ADR1) (Arabidopsis thaliana (Mouse-ear cress)).